Reading from the N-terminus, the 1487-residue chain is Major viral transcription factor (1487 aa).

Disordered regions lie at residues 41–295, 310–370, and 803–1007; these read AAPD…LPPG, LAKT…AEEA, and PPTR…HTPR. Over residues 66 to 75 the composition is skewed to pro residues; the sequence is VIPPPSPTPE. Composition is skewed to low complexity over residues 165–193 and 201–213; these read PSSASPGGGSPAPRVRSISISSSSSSSSS and DGAGASSSSSSSS. A compositionally biased stretch (acidic residues) spans 214-224; the sequence is DDSDSDEGGEE. The segment covering 235 to 272 has biased composition (low complexity); sequence AAKTPSAAGSPGPSSGGDRPAAGAATPKSCRSGAASPG. The segment covering 273-285 has biased composition (pro residues); it reads APAPAPASAPAPS. Low complexity-rich tracts occupy residues 807–829, 849–860, and 867–877; these read SQQPSSSSPGGEPFSGSAAAEGS, PSSHSQSPQHSQ, and ATTATCCRATQ. Residues 878–893 show a composition bias toward polar residues; it reads TNARSRGQQHQPQKAR. Basic residues predominate over residues 920-929; the sequence is HGRPRGKSGK. Residues 938–951 show a composition bias toward low complexity; the sequence is AAQAGASASFSSSA. Basic and acidic residues predominate over residues 988–1007; sequence GPDRRGGFRRVPRGDCHTPR.

The protein belongs to the herpesviridae ICP4 family. Post-translationally, a long stretch of serine residues may be a major site of phosphorylation.

It is found in the host nucleus. In terms of biological role, this IE protein is a multifunctional protein capable of migrating to the nucleus, binding to DNA, trans-activating other viral genes, and autoregulating its own synthesis. This Equine herpesvirus 1 (strain Ab4p) (EHV-1) protein is Major viral transcription factor (IE).